We begin with the raw amino-acid sequence, 386 residues long: Putative nickel insertion protein (386 aa).

The protein belongs to the LarC family.

This chain is Putative nickel insertion protein, found in Dictyoglomus thermophilum (strain ATCC 35947 / DSM 3960 / H-6-12).